Reading from the N-terminus, the 860-residue chain is MEPRQELLDPERVREEAKRIVRWLCGLVDRTGKLPAGDYQGKILNTVSEICKRSKLPCGELAEALTKGRLTRSLVDYSELLISNLVVGYFDVLEIYLGKQSVRLSDIREMACKYTFYAINRRLEDYIKFQTAWLQARAMRDVTPEPEAPSWLNEGFGRCFSALLNRKVHLRCVLRARPNDVSLAASLYQVKRVAPPLPDDQIEKNLEKSLDRLTKDEEPAGVDEPFLEDLKRECKRTVDELVQNARREGWNRKISRDCFPSQSAAFENPISKGGQLGQLVKENNTPRLPVLLGMFEYKGRVTPVYGWADDGDTILSDEELGREVPAALKCRRSPVLEPFKVRVITMGPAVQYYRARRVQGCLWDLLKHTRCTHLPNRPVEESDIGFYVRRRGADLFRGEEVPYVSGDYSAATDNLHPDLSLSVVDRVCDHLLSDDNRPLDPVSPWRVLFHRVLVGHRIYDGNSSRNTEVAAQSWGQLMGSPLSFPVLCIVNLAVTRYVLEKACGRIVTLEESGILVNGDDILFRCPERTIPFWTRMVTIAGLSPSPGKNFVSYRYCQLNSELYDMSGSRAEYLPFIKANLIYGTLARGCERKRAADLCYGDTTTEGGTFGHRARALIKGFGPDMQDRLMSRFLHSIKGFLEKIPEVSWFIHPRYGGLGLPLTRPVTHNPYHLRIAAYLSCGGEQSQEARCMMQWLSAPTKSFNAATLLRILEVARNCKVPFRKVPFALLHRAEAAGVDLEALFRKALLRSAPRLGVEYPSNESGDMQRLGDWRRFFRDVGRKAARTRCRSGTADERKGLFLMSPDNAVKGPQYEYIFDWASHNMGGNIWDPSYKFRADPFSSSESDEPRAKEIGPNRGPE.

Residues 839–860 (PFSSSESDEPRAKEIGPNRGPE) are disordered. Residues 846-860 (DEPRAKEIGPNRGPE) show a composition bias toward basic and acidic residues.

The protein belongs to the ssRNA positive-strand viruses RNA-directed RNA polymerase family.

The catalysed reaction is RNA(n) + a ribonucleoside 5'-triphosphate = RNA(n+1) + diphosphate. RNA-dependent RNA polymerase which replicates the viral genome. The protein is RNA-dependent RNA polymerase of Ourmia melon virus (isolate Melon/Iran/VE9) (OuMV).